Reading from the N-terminus, the 501-residue chain is 25-hydroxyvitamin D-1 alpha hydroxylase, mitochondrial (501 aa).

Cys-448 provides a ligand contact to heme.

The protein belongs to the cytochrome P450 family. Heme serves as cofactor. In terms of tissue distribution, kidney.

The protein localises to the mitochondrion membrane. The catalysed reaction is calcidiol + 2 reduced [adrenodoxin] + O2 + 2 H(+) = calcitriol + 2 oxidized [adrenodoxin] + H2O. It catalyses the reaction secalciferol + 2 reduced [adrenodoxin] + O2 + 2 H(+) = calcitetrol + 2 oxidized [adrenodoxin] + H2O. The protein operates within hormone biosynthesis; cholecalciferol biosynthesis. Its function is as follows. Catalyzes the conversion of 25-hydroxyvitamin D3 (25(OH)D3) to 1-alpha,25-dihydroxyvitamin D3 (1alpha,25(OH)(2)D3), and of 24,25-dihydroxyvitamin D3 (24,25(OH)(2)D3) to 1-alpha,24,25-trihydroxyvitamin D3 (1alpha,24,25(OH)(3)D3). Is also active with 25-hydroxy-24-oxo-vitamin D3. Plays an important role in normal bone growth, calcium metabolism, and tissue differentiation. In Rattus norvegicus (Rat), this protein is 25-hydroxyvitamin D-1 alpha hydroxylase, mitochondrial (Cyp27b1).